Reading from the N-terminus, the 202-residue chain is Large ribosomal subunit protein eL13 (202 aa).

It belongs to the eukaryotic ribosomal protein eL13 family.

In Nicotiana tabacum (Common tobacco), this protein is Large ribosomal subunit protein eL13 (RPL13).